Here is a 347-residue protein sequence, read N- to C-terminus: DNA-directed RNA polymerase subunit alpha (347 aa).

The tract at residues 1 to 226 (MLISQRPTLS…ELFGLARELN (226 aa)) is alpha N-terminal domain (alpha-NTD). The alpha C-terminal domain (alpha-CTD) stretch occupies residues 243–347 (HIASFALPID…SQDYAETEQL (105 aa)). The tract at residues 326-347 (TTGTWSTDGAYDSQDYAETEQL) is disordered.

Belongs to the RNA polymerase alpha chain family. In terms of assembly, homodimer. The RNAP catalytic core consists of 2 alpha, 1 beta, 1 beta' and 1 omega subunit. When a sigma factor is associated with the core the holoenzyme is formed, which can initiate transcription.

It carries out the reaction RNA(n) + a ribonucleoside 5'-triphosphate = RNA(n+1) + diphosphate. Functionally, DNA-dependent RNA polymerase catalyzes the transcription of DNA into RNA using the four ribonucleoside triphosphates as substrates. The chain is DNA-directed RNA polymerase subunit alpha from Mycobacterium leprae (strain TN).